The sequence spans 445 residues: Cytochrome b (445 aa).

At serine 2–valine 49 the chain is on the cytoplasmic side. A helical transmembrane segment spans residues valine 50–methionine 67. The Periplasmic segment spans residues histidine 68–arginine 94. Residues tyrosine 95–phenylalanine 113 form a helical membrane-spanning segment. Heme b is bound by residues histidine 97 and histidine 111. The Cytoplasmic segment spans residues arginine 114–tryptophan 129. A helical membrane pass occupies residues isoleucine 130 to leucine 149. Over proline 150–arginine 193 the chain is Periplasmic. A helical transmembrane segment spans residues phenylalanine 194–phenylalanine 216. Positions 198 and 212 each coordinate heme b. Residues histidine 217 to aspartate 252 lie on the Cytoplasmic side of the membrane. The helical transmembrane segment at valine 253–methionine 270 threads the bilayer. Residues proline 271–lysine 329 lie on the Periplasmic side of the membrane. Residues phenylalanine 330–valine 346 traverse the membrane as a helical segment. Over proline 347–lysine 364 the chain is Cytoplasmic. A helical membrane pass occupies residues isoleucine 365–alanine 382. The Periplasmic portion of the chain corresponds to glutamine 383–proline 388. The helical transmembrane segment at tyrosine 389–leucine 408 threads the bilayer. The Cytoplasmic portion of the chain corresponds to proline 409–glutamate 445.

Belongs to the cytochrome b family. The main subunits of complex b-c1 are: cytochrome b, cytochrome c1 and the Rieske protein. It depends on heme b as a cofactor.

The protein localises to the cell membrane. Component of the ubiquinol-cytochrome c reductase complex (complex III or cytochrome b-c1 complex), which is a respiratory chain that generates an electrochemical potential coupled to ATP synthesis. This Cereibacter sphaeroides (Rhodobacter sphaeroides) protein is Cytochrome b (petB).